Here is a 396-residue protein sequence, read N- to C-terminus: Protein TOC75-4, chloroplastic (396 aa).

The Chloroplast intermembrane segment spans residues 1 to 23 (MEAVKEAVRKIKSLVIPHADEKD). A beta stranded transmembrane segment spans residues 24 to 32 (NGIVFEIKL). The Cytoplasmic portion of the chain corresponds to 33–87 (NETDQRVEKWGLDPSLDFFEVTGNCNLGRPNSEGSNQSLMGSVTIRNIFNPKLDD). A beta stranded transmembrane segment spans residues 88–96 (LLSKIEYVR). At 97-140 (FLEAVKKPRNRTFKTSFFNSRKLSPVFTGGPGYEDLVPPMFVGR) the chain is on the chloroplast intermembrane side. The chain crosses the membrane as a beta stranded span at residues 141 to 148 (DCLKATIT). Residues 149–156 (ENLTRQRE) lie on the Cytoplasmic side of the membrane. A beta stranded transmembrane segment spans residues 157 to 164 (LTYGVMFE). The Chloroplast intermembrane segment spans residues 165-271 (EIITRDENRR…VEEGSDKPQP (107 aa)). Residues 272 to 280 (PVLVLHGRY) traverse the membrane as a beta stranded segment. Residues 281-292 (GGCIGDLPSYDV) lie on the Cytoplasmic side of the membrane. Residues 293–301 (FALGGPNSV) form a beta stranded membrane-spanning segment. Topologically, residues 302 to 363 (RGYSMGELGA…LYRKMGHGSS (62 aa)) are chloroplast intermembrane. Residues 364–370 (YGLGVKL) form a beta stranded membrane-spanning segment. At 371–384 (GMVRAEYTVRHNRG) the chain is on the cytoplasmic side. Residues 385–392 (TGALFLRF) traverse the membrane as a beta stranded segment. The Chloroplast intermembrane portion of the chain corresponds to 393–396 (GERY).

The protein belongs to the TOC75 family. In terms of assembly, part of the TOC core complex that includes a protein for the specific recognition of transit peptides surrounded by a ring composed of four proteins forming translocation channels, and four to five GTP-binding proteins providing energy. This core complex can interact with components of the TIC complex to form a larger import complex. Chloroplastic protein precursors also interacts with these complexes. Expressed ubiquitously at low levels.

The protein localises to the plastid. It is found in the chloroplast outer membrane. Its function is as follows. Mediates the insertion of proteins targeted to the outer membrane of chloroplasts. Required for the import of protein precursors into chloroplasts. Forms the voltage-dependent preprotein translocation channels (hydrophilic beta barrel) of the TOC complex in the chloroplastic outer membrane. Required for etioplast formation and/or etioplast-chloroplast transition during deetiolation. The sequence is that of Protein TOC75-4, chloroplastic (TOC75-4) from Arabidopsis thaliana (Mouse-ear cress).